The following is a 249-amino-acid chain: Indole-3-glycerol phosphate synthase (249 aa).

The protein belongs to the TrpC family.

It catalyses the reaction 1-(2-carboxyphenylamino)-1-deoxy-D-ribulose 5-phosphate + H(+) = (1S,2R)-1-C-(indol-3-yl)glycerol 3-phosphate + CO2 + H2O. The protein operates within amino-acid biosynthesis; L-tryptophan biosynthesis; L-tryptophan from chorismate: step 4/5. The chain is Indole-3-glycerol phosphate synthase from Pyrobaculum arsenaticum (strain DSM 13514 / JCM 11321 / PZ6).